We begin with the raw amino-acid sequence, 564 residues long: 2-succinyl-5-enolpyruvyl-6-hydroxy-3-cyclohexene-1-carboxylate synthase (564 aa).

Belongs to the TPP enzyme family. MenD subfamily. Homodimer. Mg(2+) serves as cofactor. Requires Mn(2+) as cofactor. Thiamine diphosphate is required as a cofactor.

It carries out the reaction isochorismate + 2-oxoglutarate + H(+) = 5-enolpyruvoyl-6-hydroxy-2-succinyl-cyclohex-3-ene-1-carboxylate + CO2. It participates in quinol/quinone metabolism; 1,4-dihydroxy-2-naphthoate biosynthesis; 1,4-dihydroxy-2-naphthoate from chorismate: step 2/7. The protein operates within quinol/quinone metabolism; menaquinone biosynthesis. Its function is as follows. Catalyzes the thiamine diphosphate-dependent decarboxylation of 2-oxoglutarate and the subsequent addition of the resulting succinic semialdehyde-thiamine pyrophosphate anion to isochorismate to yield 2-succinyl-5-enolpyruvyl-6-hydroxy-3-cyclohexene-1-carboxylate (SEPHCHC). This Photorhabdus laumondii subsp. laumondii (strain DSM 15139 / CIP 105565 / TT01) (Photorhabdus luminescens subsp. laumondii) protein is 2-succinyl-5-enolpyruvyl-6-hydroxy-3-cyclohexene-1-carboxylate synthase.